The chain runs to 66 residues: Beta-defensin 107A (66 aa).

The signal sequence occupies residues 1 to 22 (MKIFFFIFAALILLAQIFQART). Intrachain disulfides connect C37/C51 and C41/C60.

This sequence belongs to the beta-defensin family.

The protein resides in the secreted. Functionally, has antibacterial activity. The protein is Beta-defensin 107A (DEFB107A) of Macaca fascicularis (Crab-eating macaque).